Reading from the N-terminus, the 140-residue chain is 6,7-dimethyl-8-ribityllumazine synthase (140 aa).

5-amino-6-(D-ribitylamino)uracil-binding positions include phenylalanine 11, 43 to 45 (SFD), and 67 to 69 (CVI). 72–73 (DT) contacts (2S)-2-hydroxy-3-oxobutyl phosphate. The active-site Proton donor is histidine 75. Position 100 (leucine 100) interacts with 5-amino-6-(D-ribitylamino)uracil. A (2S)-2-hydroxy-3-oxobutyl phosphate-binding site is contributed by arginine 115.

This sequence belongs to the DMRL synthase family. Forms an icosahedral capsid composed of 60 subunits, arranged as a dodecamer of pentamers.

The enzyme catalyses (2S)-2-hydroxy-3-oxobutyl phosphate + 5-amino-6-(D-ribitylamino)uracil = 6,7-dimethyl-8-(1-D-ribityl)lumazine + phosphate + 2 H2O + H(+). It functions in the pathway cofactor biosynthesis; riboflavin biosynthesis; riboflavin from 2-hydroxy-3-oxobutyl phosphate and 5-amino-6-(D-ribitylamino)uracil: step 1/2. Catalyzes the formation of 6,7-dimethyl-8-ribityllumazine by condensation of 5-amino-6-(D-ribitylamino)uracil with 3,4-dihydroxy-2-butanone 4-phosphate. This is the penultimate step in the biosynthesis of riboflavin. The sequence is that of 6,7-dimethyl-8-ribityllumazine synthase from Methanococcus vannielii (strain ATCC 35089 / DSM 1224 / JCM 13029 / OCM 148 / SB).